We begin with the raw amino-acid sequence, 158 residues long: Cyclic pyranopterin monophosphate synthase (158 aa).

Substrate is bound by residues 74-76 and 112-113; these read MCH and ME. Asp127 is a catalytic residue.

This sequence belongs to the MoaC family. Homohexamer; trimer of dimers.

It carries out the reaction (8S)-3',8-cyclo-7,8-dihydroguanosine 5'-triphosphate = cyclic pyranopterin phosphate + diphosphate. The protein operates within cofactor biosynthesis; molybdopterin biosynthesis. In terms of biological role, catalyzes the conversion of (8S)-3',8-cyclo-7,8-dihydroguanosine 5'-triphosphate to cyclic pyranopterin monophosphate (cPMP). This is Cyclic pyranopterin monophosphate synthase from Helicobacter pylori (strain ATCC 700392 / 26695) (Campylobacter pylori).